A 297-amino-acid chain; its full sequence is Ribosomal RNA small subunit methyltransferase A (297 aa).

Asparagine 31, leucine 33, glycine 58, glutamate 79, aspartate 104, and asparagine 129 together coordinate S-adenosyl-L-methionine.

It belongs to the class I-like SAM-binding methyltransferase superfamily. rRNA adenine N(6)-methyltransferase family. RsmA subfamily.

Its subcellular location is the cytoplasm. It carries out the reaction adenosine(1518)/adenosine(1519) in 16S rRNA + 4 S-adenosyl-L-methionine = N(6)-dimethyladenosine(1518)/N(6)-dimethyladenosine(1519) in 16S rRNA + 4 S-adenosyl-L-homocysteine + 4 H(+). Functionally, specifically dimethylates two adjacent adenosines (A1518 and A1519) in the loop of a conserved hairpin near the 3'-end of 16S rRNA in the 30S particle. May play a critical role in biogenesis of 30S subunits. The chain is Ribosomal RNA small subunit methyltransferase A from Staphylococcus aureus (strain bovine RF122 / ET3-1).